Here is a 163-residue protein sequence, read N- to C-terminus: Beta-lactoglobulin-2 (163 aa).

Disulfide bonds link C66–C161 and C106–C120.

It belongs to the calycin superfamily. Lipocalin family. Monomer.

It localises to the secreted. Functionally, lactoglobulin is the primary component of whey, it binds retinol and is probably involved in the transport of that molecule. The chain is Beta-lactoglobulin-2 (LGB2) from Equus asinus (Donkey).